The chain runs to 116 residues: Aspartate 1-decarboxylase (116 aa).

S25 functions as the Schiff-base intermediate with substrate; via pyruvic acid in the catalytic mechanism. S25 carries the post-translational modification Pyruvic acid (Ser). T57 lines the substrate pocket. Y58 functions as the Proton donor in the catalytic mechanism. 73-75 (GAA) lines the substrate pocket.

This sequence belongs to the PanD family. In terms of assembly, heterooctamer of four alpha and four beta subunits. It depends on pyruvate as a cofactor. Post-translationally, is synthesized initially as an inactive proenzyme, which is activated by self-cleavage at a specific serine bond to produce a beta-subunit with a hydroxyl group at its C-terminus and an alpha-subunit with a pyruvoyl group at its N-terminus.

The protein localises to the cytoplasm. It catalyses the reaction L-aspartate + H(+) = beta-alanine + CO2. It participates in cofactor biosynthesis; (R)-pantothenate biosynthesis; beta-alanine from L-aspartate: step 1/1. Its function is as follows. Catalyzes the pyruvoyl-dependent decarboxylation of aspartate to produce beta-alanine. This chain is Aspartate 1-decarboxylase, found in Phocaeicola vulgatus (strain ATCC 8482 / DSM 1447 / JCM 5826 / CCUG 4940 / NBRC 14291 / NCTC 11154) (Bacteroides vulgatus).